The following is a 592-amino-acid chain: Imidazole glycerol phosphate synthase hisHF, chloroplastic (592 aa).

Residues 1-55 (MEATAAPFSSIVSSRQNFSSSSSIRASSPASLFLSQKSIGNVNRKFKSPRSLSVR) constitute a chloroplast transit peptide. In terms of domain architecture, Glutamine amidotransferase type-1 spans 63 to 271 (VVTLLDYGAG…LHPKLPATQK (209 aa)). Catalysis depends on for GATase activity residues cysteine 141, histidine 246, and glutamate 248. The cyclase stretch occupies residues 280–592 (LAKRVIACLD…LQEERIEVRI (313 aa)). Residues aspartate 289 and aspartate 447 contribute to the active site.

The protein in the C-terminal section; belongs to the HisA/HisF family.

Its subcellular location is the plastid. It is found in the chloroplast. It catalyses the reaction 5-[(5-phospho-1-deoxy-D-ribulos-1-ylimino)methylamino]-1-(5-phospho-beta-D-ribosyl)imidazole-4-carboxamide + L-glutamine = D-erythro-1-(imidazol-4-yl)glycerol 3-phosphate + 5-amino-1-(5-phospho-beta-D-ribosyl)imidazole-4-carboxamide + L-glutamate + H(+). The catalysed reaction is L-glutamine + H2O = L-glutamate + NH4(+). It functions in the pathway amino-acid biosynthesis; L-histidine biosynthesis; L-histidine from 5-phospho-alpha-D-ribose 1-diphosphate: step 5/9. IGPS catalyzes the conversion of PRFAR and glutamine to IGP, AICAR and glutamate. The glutaminase domain produces the ammonia necessary for the cyclase domain to produce IGP and AICAR from PRFAR. The ammonia is channeled to the active site of the cyclase domain. The polypeptide is Imidazole glycerol phosphate synthase hisHF, chloroplastic (HISN4) (Arabidopsis thaliana (Mouse-ear cress)).